Here is a 356-residue protein sequence, read N- to C-terminus: Replication factor C subunit 3 (356 aa).

Residue Lys20 is modified to N6-acetyllysine. A Phosphoserine modification is found at Ser125.

The protein belongs to the activator 1 small subunits family. As to quaternary structure, subunit of the RFC complex, an heteropentameric complex consisting of a large subunit RFC1 and four small subunits RFC2, RFC3, RFC4 and RFC5; the RFC complex interacts with PCNA. Forms an heterotetrameric complex with RFC2, RFC4 and RFC5; this complex has ATPase activity but is not stimulated by PCNA. The heterotetramer of subunits RFC2, RFC3, RFC4 and RFC5 interacts with RAD17. Interacts with CNTD1; this interaction facilitates crossover formation.

It is found in the nucleus. In terms of biological role, subunit of the replication factor C (RFC) complex which acts during elongation of primed DNA templates by DNA polymerases delta and epsilon, and is necessary for ATP-dependent loading of proliferating cell nuclear antigen (PCNA) onto primed DNA. The protein is Replication factor C subunit 3 (RFC3) of Homo sapiens (Human).